The primary structure comprises 76 residues: uncharacterized protein (76 aa).

This sequence to L.innocua lin1255, lin1742 and lin2600.

This is an uncharacterized protein from Listeria innocua serovar 6a (strain ATCC BAA-680 / CLIP 11262).